We begin with the raw amino-acid sequence, 689 residues long: Zinc finger protein 185 (689 aa).

Disordered regions lie at residues 1–253 (MSIS…GRTK) and 298–534 (APDV…SCTS). Residues 35-52 (LKGDKSWITKQDESEGRT) show a composition bias toward basic and acidic residues. S66 bears the Phosphoserine mark. The span at 95–114 (IDSSSQPQQQFPKANGTPKS) shows a compositional bias: polar residues. A Phosphoserine modification is found at S153. The segment covering 157–166 (DTEEEEEEEV) has biased composition (acidic residues). P206 bears the Phosphoserine mark. 2 stretches are compositionally biased toward basic and acidic residues: residues 217–232 (KRVE…EKSQ) and 310–331 (NKDK…EEAF). Residues 338–349 (AARSSAQLSDGN) show a composition bias toward polar residues. 2 stretches are compositionally biased toward low complexity: residues 373-382 (SSSATSVSAV) and 434-444 (DPAVPAQQPAD). T447 carries the phosphothreonine modification. Residues 448 to 458 (PERQSSPSGSE) show a composition bias toward polar residues. Phosphoserine is present on residues S453 and S465. A compositionally biased stretch (polar residues) spans 504 to 524 (PTQQPADPSTPEQQNSPSGSE). One can recognise an LIM zinc-binding domain in the interval 627–689 (GICTYCNREI…HCGKCYEKLF (63 aa)).

In terms of tissue distribution, expressed in placenta, pancreas and kidney. Also expressed in prostate, testis, ovary and blood.

It localises to the cytoplasm. The protein localises to the cytoskeleton. Its subcellular location is the cell junction. The protein resides in the focal adhesion. Its function is as follows. May be involved in the regulation of cellular proliferation and/or differentiation. This is Zinc finger protein 185 (ZNF185) from Homo sapiens (Human).